Here is a 359-residue protein sequence, read N- to C-terminus: Olfactory receptor 8S1 (359 aa).

Residues 1–25 (MALGNHSTITEFLLLGLSADPNIRA) are Extracellular-facing. Asparagine 5 is a glycosylation site (N-linked (GlcNAc...) asparagine). The chain crosses the membrane as a helical span at residues 26 to 46 (LLFVLFLGIYLLTIMENLMLL). The Cytoplasmic segment spans residues 47-54 (LMIRADSC). The chain crosses the membrane as a helical span at residues 55 to 75 (LHKPMYFFLSHLSFVDLCFSS). The Extracellular segment spans residues 76 to 99 (VIVPKMLENLLSQRKTISVEGCLA). An intrachain disulfide couples cysteine 97 to cysteine 189. Residues 100–120 (QVFFVFVTAGTEACLLSGMAY) form a helical membrane-spanning segment. The Cytoplasmic segment spans residues 121-139 (DRHAAICRPLLYGQIMGKQ). The chain crosses the membrane as a helical span at residues 140–160 (LYMHLVWGSWGLGFLDALINV). The Extracellular portion of the chain corresponds to 161–197 (LLAVNMVFCEAKIIHHYSYEMPSLLPLSCSDISRSLI). Residues 198 to 217 (ALLCSTLLHGLGNFLLVFLS) form a helical membrane-spanning segment. Residues 218 to 237 (YTRIISTILSISSTSGRSKA) are Cytoplasmic-facing. Residues 238–258 (FSTCSAHLTAVTLYYGSGLLR) form a helical membrane-spanning segment. Residues 259–269 (HLMPNSGSPIE) are Extracellular-facing. Residues 270 to 290 (LIFSVQYTVVTPMLNSLIYSL) form a helical membrane-spanning segment. Over 291–359 (KNKEVKGERS…ALRAAPTALP (69 aa)) the chain is Cytoplasmic. The disordered stretch occupies residues 301–338 (LRDSSHLPQLHKGQARWKRPAFTEGRREPGHPELSIPV).

The protein belongs to the G-protein coupled receptor 1 family.

The protein localises to the cell membrane. Functionally, odorant receptor. This chain is Olfactory receptor 8S1 (OR8S1), found in Homo sapiens (Human).